A 500-amino-acid chain; its full sequence is Probable malate:quinone oxidoreductase (500 aa).

This sequence belongs to the MQO family. FAD serves as cofactor.

It catalyses the reaction (S)-malate + a quinone = a quinol + oxaloacetate. The protein operates within carbohydrate metabolism; tricarboxylic acid cycle; oxaloacetate from (S)-malate (quinone route): step 1/1. The sequence is that of Probable malate:quinone oxidoreductase from Corynebacterium glutamicum (strain R).